Here is a 186-residue protein sequence, read N- to C-terminus: UPF0149 protein Pfl01_5435 (186 aa).

This sequence belongs to the UPF0149 family.

The sequence is that of UPF0149 protein Pfl01_5435 from Pseudomonas fluorescens (strain Pf0-1).